Reading from the N-terminus, the 489-residue chain is Betaine aldehyde dehydrogenase (489 aa).

K(+) contacts are provided by threonine 26 and aspartate 93. Residue 150-152 participates in NAD(+) binding; the sequence is GAW. Lysine 162 acts as the Charge relay system in catalysis. 176-179 contributes to the NAD(+) binding site; it reads KPSE. Valine 180 is a K(+) binding site. 229-232 is an NAD(+) binding site; that stretch reads GVET. Residue leucine 245 coordinates K(+). The active-site Proton acceptor is the glutamate 251. The NAD(+) site is built by glycine 253, cysteine 285, and glutamate 386. Residue cysteine 285 is the Nucleophile of the active site. Cysteine 285 is modified (cysteine sulfenic acid (-SOH)). Residues lysine 456 and glycine 459 each coordinate K(+). Glutamate 463 acts as the Charge relay system in catalysis.

Belongs to the aldehyde dehydrogenase family. As to quaternary structure, dimer of dimers. It depends on K(+) as a cofactor.

It catalyses the reaction betaine aldehyde + NAD(+) + H2O = glycine betaine + NADH + 2 H(+). It participates in amine and polyamine biosynthesis; betaine biosynthesis via choline pathway; betaine from betaine aldehyde: step 1/1. Involved in the biosynthesis of the osmoprotectant glycine betaine. Catalyzes the irreversible oxidation of betaine aldehyde to the corresponding acid. The protein is Betaine aldehyde dehydrogenase of Paraburkholderia phymatum (strain DSM 17167 / CIP 108236 / LMG 21445 / STM815) (Burkholderia phymatum).